The following is a 549-amino-acid chain: Glucose-6-phosphate isomerase (549 aa).

The Proton donor role is filled by glutamate 353. Residues histidine 384 and lysine 513 contribute to the active site.

Belongs to the GPI family.

It localises to the cytoplasm. It carries out the reaction alpha-D-glucose 6-phosphate = beta-D-fructose 6-phosphate. Its pathway is carbohydrate biosynthesis; gluconeogenesis. It participates in carbohydrate degradation; glycolysis; D-glyceraldehyde 3-phosphate and glycerone phosphate from D-glucose: step 2/4. Its function is as follows. Catalyzes the reversible isomerization of glucose-6-phosphate to fructose-6-phosphate. The chain is Glucose-6-phosphate isomerase from Brucella ovis (strain ATCC 25840 / 63/290 / NCTC 10512).